A 144-amino-acid chain; its full sequence is MIALIQRVSQAKVDVKGETIGKIGKGLLVLLGVEKEDNREKADKLAEKVLNYRIFSDENDKMNLNVQQAQGELLIVSQFTLAADTQKGLRPSFSKGASPALANELYEYFIQKCAEKLPVSTGQFAADMQVSLTNDGPVTFWLNV.

The short motif at 136–137 (GP) is the Gly-cisPro motif, important for rejection of L-amino acids element.

Belongs to the DTD family. In terms of assembly, homodimer.

Its subcellular location is the cytoplasm. The enzyme catalyses glycyl-tRNA(Ala) + H2O = tRNA(Ala) + glycine + H(+). It carries out the reaction a D-aminoacyl-tRNA + H2O = a tRNA + a D-alpha-amino acid + H(+). An aminoacyl-tRNA editing enzyme that deacylates mischarged D-aminoacyl-tRNAs. Also deacylates mischarged glycyl-tRNA(Ala), protecting cells against glycine mischarging by AlaRS. Acts via tRNA-based rather than protein-based catalysis; rejects L-amino acids rather than detecting D-amino acids in the active site. By recycling D-aminoacyl-tRNA to D-amino acids and free tRNA molecules, this enzyme counteracts the toxicity associated with the formation of D-aminoacyl-tRNA entities in vivo and helps enforce protein L-homochirality. The sequence is that of D-aminoacyl-tRNA deacylase from Haemophilus influenzae (strain ATCC 51907 / DSM 11121 / KW20 / Rd).